We begin with the raw amino-acid sequence, 129 residues long: MKILVALAVFFLVSTQLFAEEIGANDDLNYWSDWYDSDQIKEELPEPFEHLLQRIARRPKPQQFFGLMGKRDADSSIEKQVALLKALYGHGQISHKRHKTDSFVGLMGKRALNSVAYERSAMQNYERRR.

The N-terminal stretch at 1–19 (MKILVALAVFFLVSTQLFA) is a signal peptide. Residues 20–56 (EEIGANDDLNYWSDWYDSDQIKEELPEPFEHLLQRIA) constitute a propeptide that is removed on maturation. Methionine amide occurs at positions 68 and 107.

It belongs to the tachykinin family. Post-translationally, the substance P form is cleaved at Pro-59 by the prolyl endopeptidase FAP (seprase) activity (in vitro). Substance P is also cleaved and degraded by Angiotensin-converting enzyme (ACE) and neprilysin (MME).

Its subcellular location is the secreted. Its function is as follows. Tachykinins are active peptides which excite neurons, evoke behavioral responses, are potent vasodilators and secretagogues, and contract (directly or indirectly) many smooth muscles. The polypeptide is Protachykinin-1 (TAC1) (Homo sapiens (Human)).